Here is a 500-residue protein sequence, read N- to C-terminus: Probable cytosol aminopeptidase (500 aa).

Mn(2+)-binding residues include lysine 264 and aspartate 269. Residue lysine 276 is part of the active site. Positions 287, 346, and 348 each coordinate Mn(2+). Arginine 350 is an active-site residue.

This sequence belongs to the peptidase M17 family. Mn(2+) serves as cofactor.

The protein localises to the cytoplasm. The enzyme catalyses Release of an N-terminal amino acid, Xaa-|-Yaa-, in which Xaa is preferably Leu, but may be other amino acids including Pro although not Arg or Lys, and Yaa may be Pro. Amino acid amides and methyl esters are also readily hydrolyzed, but rates on arylamides are exceedingly low.. The catalysed reaction is Release of an N-terminal amino acid, preferentially leucine, but not glutamic or aspartic acids.. Presumably involved in the processing and regular turnover of intracellular proteins. Catalyzes the removal of unsubstituted N-terminal amino acids from various peptides. The protein is Probable cytosol aminopeptidase of Rickettsia canadensis (strain McKiel).